The chain runs to 503 residues: MSIKAEEISSLIKQQLEHYDDKLDIEEVGVVTYVGDGIARAHGLNNVLSSELLQFDNGAYGIAQNLESNDVGIIILGKFDDIREGDRVKRTGRIMEVPVGDALIGRVVNPLGQPVDGLGEIKTDKTRPIESKAPGVMQRQSVNQPLQTGIKAIDALVPIGRGQRELVIGDRKTGKTSLAIDTILNQKGQDVICIYVSIGQKESTVRAQVETLKKLGAMDYTIVVEAGPSEPAPMLYIAPYSGIAMGEEFMYAGKDVLVVFDDLSKQAVAYRELSLLLRRPPGREAYPGDVFYLHSRLLERSAKLSKELGGGSLTALPVIQTEAGDISAYIPTNVISITDGQIFLQSDMFFSGTRPAIDAGASVSRVGGAAQIPAMKKVAGTLRTDLASYRELESFAQFGSDLDQATQAKLARGRRTVEVLKQPLHKPVAVEKQVVLLYALTHGFMDAVPVDDIARFEQELYTDFDANHADLLAEIKSTGKLPDENKLQEALQQFASSFSSSNK.

169–176 (GDRKTGKT) is a binding site for ATP.

This sequence belongs to the ATPase alpha/beta chains family. F-type ATPases have 2 components, CF(1) - the catalytic core - and CF(0) - the membrane proton channel. CF(1) has five subunits: alpha(3), beta(3), gamma(1), delta(1), epsilon(1). CF(0) has three main subunits: a(1), b(2) and c(9-12). The alpha and beta chains form an alternating ring which encloses part of the gamma chain. CF(1) is attached to CF(0) by a central stalk formed by the gamma and epsilon chains, while a peripheral stalk is formed by the delta and b chains.

Its subcellular location is the cell membrane. The catalysed reaction is ATP + H2O + 4 H(+)(in) = ADP + phosphate + 5 H(+)(out). Its function is as follows. Produces ATP from ADP in the presence of a proton gradient across the membrane. The alpha chain is a regulatory subunit. The chain is ATP synthase subunit alpha from Lactobacillus delbrueckii subsp. bulgaricus (strain ATCC 11842 / DSM 20081 / BCRC 10696 / JCM 1002 / NBRC 13953 / NCIMB 11778 / NCTC 12712 / WDCM 00102 / Lb 14).